Here is a 166-residue protein sequence, read N- to C-terminus: Crossover junction endodeoxyribonuclease RuvC (166 aa).

Residues Asp-7, Glu-67, and Asp-140 contribute to the active site. Residues Asp-7, Glu-67, and Asp-140 each coordinate Mg(2+).

It belongs to the RuvC family. As to quaternary structure, homodimer which binds Holliday junction (HJ) DNA. The HJ becomes 2-fold symmetrical on binding to RuvC with unstacked arms; it has a different conformation from HJ DNA in complex with RuvA. In the full resolvosome a probable DNA-RuvA(4)-RuvB(12)-RuvC(2) complex forms which resolves the HJ. Mg(2+) is required as a cofactor.

The protein localises to the cytoplasm. It carries out the reaction Endonucleolytic cleavage at a junction such as a reciprocal single-stranded crossover between two homologous DNA duplexes (Holliday junction).. Functionally, the RuvA-RuvB-RuvC complex processes Holliday junction (HJ) DNA during genetic recombination and DNA repair. Endonuclease that resolves HJ intermediates. Cleaves cruciform DNA by making single-stranded nicks across the HJ at symmetrical positions within the homologous arms, yielding a 5'-phosphate and a 3'-hydroxyl group; requires a central core of homology in the junction. The consensus cleavage sequence is 5'-(A/T)TT(C/G)-3'. Cleavage occurs on the 3'-side of the TT dinucleotide at the point of strand exchange. HJ branch migration catalyzed by RuvA-RuvB allows RuvC to scan DNA until it finds its consensus sequence, where it cleaves and resolves the cruciform DNA. The sequence is that of Crossover junction endodeoxyribonuclease RuvC from Ruminiclostridium cellulolyticum (strain ATCC 35319 / DSM 5812 / JCM 6584 / H10) (Clostridium cellulolyticum).